A 443-amino-acid chain; its full sequence is GTPase Der (443 aa).

2 EngA-type G domains span residues 3–167 (PVIA…PEEK) and 176–349 (IKIA…QSIQ). GTP is bound by residues 9-16 (GRPNVGKS), 56-60 (DTGGL), 119-122 (NKAD), 182-189 (GRPNVGKS), 229-233 (DTAGI), and 294-297 (NKWD). In terms of domain architecture, KH-like spans 350–434 (QELTTGQLTR…PVHIKLKTDP (85 aa)).

This sequence belongs to the TRAFAC class TrmE-Era-EngA-EngB-Septin-like GTPase superfamily. EngA (Der) GTPase family. As to quaternary structure, associates with the 50S ribosomal subunit.

GTPase that plays an essential role in the late steps of ribosome biogenesis. The polypeptide is GTPase Der (Coxiella burnetii (strain CbuG_Q212) (Coxiella burnetii (strain Q212))).